Reading from the N-terminus, the 203-residue chain is Outer-membrane lipoprotein carrier protein (203 aa).

Residues 1-20 (MKKWLAISCLIAGMTSTAVY) form the signal peptide.

This sequence belongs to the LolA family. As to quaternary structure, monomer.

The protein localises to the periplasm. Its function is as follows. Participates in the translocation of lipoproteins from the inner membrane to the outer membrane. Only forms a complex with a lipoprotein if the residue after the N-terminal Cys is not an aspartate (The Asp acts as a targeting signal to indicate that the lipoprotein should stay in the inner membrane). This Pectobacterium carotovorum subsp. carotovorum (strain PC1) protein is Outer-membrane lipoprotein carrier protein.